The primary structure comprises 366 residues: Peptide chain release factor 1 (366 aa).

Gln230 bears the N5-methylglutamine mark. Basic and acidic residues-rich tracts occupy residues 283–293 and 315–328; these read ARDAQEARDRA and VTDH…KNHP. The tract at residues 283 to 335 is disordered; it reads ARDAQEARDRAAQVGSGERSEKIRTYNYPQNRVTDHRLEGDSKNHPLDSVMAG.

It belongs to the prokaryotic/mitochondrial release factor family. Methylated by PrmC. Methylation increases the termination efficiency of RF1.

The protein localises to the cytoplasm. Its function is as follows. Peptide chain release factor 1 directs the termination of translation in response to the peptide chain termination codons UAG and UAA. The polypeptide is Peptide chain release factor 1 (Deinococcus deserti (strain DSM 17065 / CIP 109153 / LMG 22923 / VCD115)).